The sequence spans 380 residues: Sialidase-2 (380 aa).

The FRIP motif motif lies at 20-23 (YRIP). Residues Arg21 and Arg41 each coordinate substrate. Asp46 functions as the Proton acceptor in the catalytic mechanism. A BNR 1 repeat occupies 127 to 138 (VTSTDHGRTWSS). Positions 179 and 181 each coordinate substrate. The BNR 2 repeat unit spans residues 197–208 (FLSHDHGRTWAR). Positions 218, 237, and 304 each coordinate substrate. The active-site Nucleophile is the Tyr334. Glu355 is an active-site residue.

This sequence belongs to the glycosyl hydrolase 33 family. Expressed in skeletal muscle, fetal liver and embryonic carcinoma cell line NT2-D1.

It localises to the cytoplasm. Its subcellular location is the cytosol. The catalysed reaction is Hydrolysis of alpha-(2-&gt;3)-, alpha-(2-&gt;6)-, alpha-(2-&gt;8)- glycosidic linkages of terminal sialic acid residues in oligosaccharides, glycoproteins, glycolipids, colominic acid and synthetic substrates.. The enzyme catalyses a ganglioside GD1a + H2O = a ganglioside GM1 + N-acetylneuraminate. It catalyses the reaction a ganglioside GM1 + H2O = a ganglioside GA1 + N-acetylneuraminate. It carries out the reaction a ganglioside GT1b + H2O = a ganglioside GD1b + N-acetylneuraminate. The catalysed reaction is a ganglioside GD1b + H2O = a ganglioside GM1 + N-acetylneuraminate. The enzyme catalyses a ganglioside GD3 + H2O = a ganglioside GM3 + N-acetylneuraminate. It catalyses the reaction a ganglioside GM3 + H2O = a beta-D-galactosyl-(1-&gt;4)-beta-D-glucosyl-(1&lt;-&gt;1)-ceramide + N-acetylneuraminate. It carries out the reaction a ganglioside GM2 + H2O = a ganglioside GA2 + N-acetylneuraminate. The catalysed reaction is a neolactoside IV(3)-alpha-NeuAc-nLc4Cer(d18:1(4E)) + H2O = a neolactoside nLc4Cer(d18:1(4E)) + N-acetylneuraminate. The enzyme catalyses N-acetyl-alpha-neuraminosyl-(2-&gt;3)-beta-D-galactosyl-(1-&gt;4)-D-glucose + H2O = lactose + N-acetylneuraminate. In terms of biological role, exo-alpha-sialidase that catalyzes the hydrolytic cleavage of the terminal sialic acid (N-acetylneuraminic acid, Neu5Ac) of a glycan moiety in the catabolism of glycolipids, glycoproteins and oligosacharides. Recognizes sialyl linkage positions of the glycan moiety as well as the supramolecular organization of the sialoglycoconjugate. Displays preference for alpha-(2-&gt;3)-sialylated GD1a and GT1B gangliosides over alpha-(2-&gt;8)-sialylated GD1b, in both monomeric forms and micelles. Hydrolyzes monomeric GM1 ganglioside, but has no activity toward the miscellar form. Has lower sialidase activity for glycoproteins such as fetuin and TF/transferrin that carry a mixture of alpha-(2-&gt;3) and alpha-(2-&gt;6)-sialyl linkages. Cleaves milk oligosaccharide alpha-(2-&gt;3)-sialyllactose, but is inactive toward alpha-(2-&gt;6)-sialyllactose isomer. Has no activity toward colominic acid, a homomer of alpha-(2-&gt;8)-linked Neu5Ac residues. This chain is Sialidase-2 (NEU2), found in Homo sapiens (Human).